The primary structure comprises 228 residues: Demethylmenaquinone methyltransferase (228 aa).

S-adenosyl-L-methionine is bound by residues threonine 62, aspartate 80, 100–101 (DA), and serine 117.

This sequence belongs to the class I-like SAM-binding methyltransferase superfamily. MenG/UbiE family.

It carries out the reaction a 2-demethylmenaquinol + S-adenosyl-L-methionine = a menaquinol + S-adenosyl-L-homocysteine + H(+). Its pathway is quinol/quinone metabolism; menaquinone biosynthesis; menaquinol from 1,4-dihydroxy-2-naphthoate: step 2/2. Its function is as follows. Methyltransferase required for the conversion of demethylmenaquinol (DMKH2) to menaquinol (MKH2). The polypeptide is Demethylmenaquinone methyltransferase (Mycolicibacterium vanbaalenii (strain DSM 7251 / JCM 13017 / BCRC 16820 / KCTC 9966 / NRRL B-24157 / PYR-1) (Mycobacterium vanbaalenii)).